A 382-amino-acid chain; its full sequence is Histidinol-phosphate aminotransferase (382 aa).

The disordered stretch occupies residues 1 to 24; that stretch reads MTSAPRPRPTLDDLPLREDLRGKS. Residues 9–22 show a composition bias toward basic and acidic residues; sequence PTLDDLPLREDLRG. Position 233 is an N6-(pyridoxal phosphate)lysine (K233).

It belongs to the class-II pyridoxal-phosphate-dependent aminotransferase family. Histidinol-phosphate aminotransferase subfamily. As to quaternary structure, homodimer. Pyridoxal 5'-phosphate serves as cofactor.

It catalyses the reaction L-histidinol phosphate + 2-oxoglutarate = 3-(imidazol-4-yl)-2-oxopropyl phosphate + L-glutamate. Its pathway is amino-acid biosynthesis; L-histidine biosynthesis; L-histidine from 5-phospho-alpha-D-ribose 1-diphosphate: step 7/9. The polypeptide is Histidinol-phosphate aminotransferase (Mycobacterium ulcerans (strain Agy99)).